The primary structure comprises 192 residues: uncharacterized protein (192 aa).

This is an uncharacterized protein from Picosynechococcus sp. (strain ATCC 27264 / PCC 7002 / PR-6) (Agmenellum quadruplicatum).